The chain runs to 369 residues: Glutamate 5-kinase (369 aa).

K9 is an ATP binding site. Positions 49, 136, and 148 each coordinate substrate. ATP contacts are provided by residues 168–169 and 210–216; these read TD and TGGMLTK. Positions 275–355 constitute a PUA domain; it reads QGSIWVDKGA…KGVLIYRDDW (81 aa).

It belongs to the glutamate 5-kinase family.

The protein resides in the cytoplasm. It catalyses the reaction L-glutamate + ATP = L-glutamyl 5-phosphate + ADP. The protein operates within amino-acid biosynthesis; L-proline biosynthesis; L-glutamate 5-semialdehyde from L-glutamate: step 1/2. In terms of biological role, catalyzes the transfer of a phosphate group to glutamate to form L-glutamate 5-phosphate. The sequence is that of Glutamate 5-kinase from Streptococcus pneumoniae serotype 4 (strain ATCC BAA-334 / TIGR4).